A 372-amino-acid polypeptide reads, in one-letter code: Putative glutamate--cysteine ligase 2 (372 aa).

Belongs to the glutamate--cysteine ligase type 2 family. YbdK subfamily. Homodimer.

The catalysed reaction is L-cysteine + L-glutamate + ATP = gamma-L-glutamyl-L-cysteine + ADP + phosphate + H(+). Functionally, ATP-dependent carboxylate-amine ligase which exhibits weak glutamate--cysteine ligase activity. The sequence is that of Putative glutamate--cysteine ligase 2 (ybdK) from Shigella dysenteriae serotype 1 (strain Sd197).